Consider the following 1368-residue polypeptide: MAP3K epsilon protein kinase 1 (1368 aa).

Residues tyrosine 20–isoleucine 274 enclose the Protein kinase domain. 2 HEAT repeats span residues glutamate 25–asparagine 62 and serine 86–isoleucine 125. Residues isoleucine 26–valine 34 and lysine 49 each bind ATP. The Proton acceptor role is filled by aspartate 144. Residues proline 218–lysine 256 form an HEAT 3 repeat. Disordered regions lie at residues glutamate 296 to serine 415 and glutamine 430 to aspartate 507. Over residues leucine 351–methionine 364 the composition is skewed to acidic residues. Composition is skewed to basic and acidic residues over residues serine 388–threonine 399 and serine 470–proline 486. Residues glutamate 488–aspartate 502 show a composition bias toward polar residues. HEAT repeat units follow at residues serine 533–leucine 571, isoleucine 628–glutamate 653, asparagine 654–leucine 695, methionine 699–leucine 737, and alanine 750–serine 788. Residues glycine 777 to threonine 883 form a disordered region. Residues leucine 791–methionine 808 show a composition bias toward polar residues. 2 stretches are compositionally biased toward basic and acidic residues: residues aspartate 813 to serine 826 and serine 836 to arginine 852. HEAT repeat units lie at residues glutamate 903–arginine 940, alanine 1025–threonine 1063, tyrosine 1067–cysteine 1105, alanine 1112–arginine 1150, glutamine 1154–asparagine 1191, leucine 1196–lysine 1234, arginine 1258–leucine 1281, alanine 1282–arginine 1318, and glutamine 1348–leucine 1368.

It belongs to the protein kinase superfamily. Ser/Thr protein kinase family. As to quaternary structure, interacts with SGP1. Autophosphorylated. In terms of tissue distribution, expressed in both the sporophytic and the gametophytic tissues, especially in dividing cells. Mostly present in flower buds and mature flowers. Also accumulates in embryos, in roots apices, trichomes and ovule integuments.

It localises to the cytoplasm. It is found in the cytoskeleton. The protein localises to the microtubule organizing center. Its subcellular location is the nucleus. The protein resides in the nucleolus. It localises to the cell membrane. The enzyme catalyses L-seryl-[protein] + ATP = O-phospho-L-seryl-[protein] + ADP + H(+). It carries out the reaction L-threonyl-[protein] + ATP = O-phospho-L-threonyl-[protein] + ADP + H(+). Serine/threonine-protein kinase involved in the spatial and temporal control system organizing cortical activities in mitotic and postmitotic cells. Required for the normal functioning of the plasma membrane in developing pollen. Involved in the regulation of cell expansion, cell elongation, and embryo development. In Arabidopsis thaliana (Mouse-ear cress), this protein is MAP3K epsilon protein kinase 1.